A 142-amino-acid chain; its full sequence is Serine protease inhibitor (142 aa).

N-acetylserine is present on S1.

Its function is as follows. Serine protease inhibitor. Active against beta-trypsin and alpha-chymotrypsin with dissociation constants of 0.35 nM and 40 nM respectively. Inhibits factor XIa, but not other enzymes involved in coagulation and fibrinolysis. Does not inhibit subtilisin, lysyl endopeptidase, arginyl endopeptidase or papain. The protein is Serine protease inhibitor of Lentinula edodes (Shiitake mushroom).